A 185-amino-acid chain; its full sequence is Elongation factor P (185 aa).

Belongs to the elongation factor P family.

The protein localises to the cytoplasm. The protein operates within protein biosynthesis; polypeptide chain elongation. Its function is as follows. Involved in peptide bond synthesis. Stimulates efficient translation and peptide-bond synthesis on native or reconstituted 70S ribosomes in vitro. Probably functions indirectly by altering the affinity of the ribosome for aminoacyl-tRNA, thus increasing their reactivity as acceptors for peptidyl transferase. This is Elongation factor P from Nitrosomonas eutropha (strain DSM 101675 / C91 / Nm57).